The following is a 366-amino-acid chain: Transcription factor MYB61 (366 aa).

2 HTH myb-type domains span residues 9–61 and 62–116; these read KQKL…INYL and RPDL…KKKL. DNA-binding regions (H-T-H motif) lie at residues 37–61 and 89–112; these read WSSVPKLAGLQRCGKSCRLRWINYL and WSQIASRLPGRTDNEIKNLWNSSI. The segment at 115 to 164 is disordered; the sequence is KLKQRGIDPNTHKPISEVESFSDKDKPTTSNNKRSGNDHKSPSSSSATNQ. Over residues 124–141 the composition is skewed to basic and acidic residues; sequence NTHKPISEVESFSDKDKP.

Expressed specifically in guard cells. Expressed in sink tissues, such as xylem, roots and developing seeds.

It is found in the nucleus. In terms of biological role, transcription factor that coordinates a small network of downstream target genes required for several aspects of plant growth and development, such as xylem formation and xylem cell differentiation, and lateral root formation. Regulates a specific set of target genes by binding DNA to the AC cis-element 5'-ACCTAC-3'. Functions as a transcriptional regulator of stomatal closure. Plays a role the regulation of stomatal pore size independently of abscisic acid (ABA). Required for seed coat mucilage deposition during the development of the seed coat epidermis. Involved in the induction of trichome initiation and branching by positively regulating GL1 and GL2. Required for gibberellin (GA) biosynthesis and degradation by positively affecting the expression of the enzymes that convert GA9 into the bioactive GA4, as well as the enzymes involved in the degradation of GA4. The polypeptide is Transcription factor MYB61 (Arabidopsis thaliana (Mouse-ear cress)).